The primary structure comprises 77 residues: Omega-conotoxin-like 6 (77 aa).

A signal peptide spans 1-22 (MKLTCVVIIAVLLLTACQLITA). A propeptide spanning residues 23–50 (DDSRGVQKHRSLRSTTKVSKSTSCMEAG) is cleaved from the precursor. 3 disulfides stabilise this stretch: Cys-46/Cys-61, Cys-53/Cys-64, and Cys-60/Cys-71.

It belongs to the conotoxin O1 superfamily. As to expression, expressed by the venom duct.

It is found in the secreted. In terms of biological role, omega-conotoxins act at presynaptic membranes, they bind and block voltage-gated calcium channels (Cav). The chain is Omega-conotoxin-like 6 from Conus striatus (Striated cone).